Reading from the N-terminus, the 360-residue chain is Sensor histidine kinase LiaS (360 aa).

Topologically, residues 1 to 15 (MRKKMLASLQWRAIR) are cytoplasmic. The chain crosses the membrane as a helical span at residues 16–36 (MTTGISLLLFVCLISFMMFYY). Residues 37 to 47 (RLDPLVLLSSS) lie on the Extracellular side of the membrane. The helical transmembrane segment at 48–68 (WFGIPFILILLLISVTVGFAS) threads the bilayer. At 69–360 (GYMYGNRLKT…ENERDSSIID (292 aa)) the chain is on the cytoplasmic side. Residues 74-126 (NRLKTRIDTLIESILTFENGNFAYRIPPLGDDEIGLAADQLNEMAKRVELQVA) form the HAMP domain. The 194-residue stretch at 153–346 (RLARDLHDAV…QIEVKVPIFP (194 aa)) folds into the Histidine kinase domain. A Phosphohistidine; by autocatalysis modification is found at H159.

Its subcellular location is the cell membrane. It catalyses the reaction ATP + protein L-histidine = ADP + protein N-phospho-L-histidine.. Functionally, member of the two-component regulatory system LiaS/LiaR probably involved in response to a subset of cell wall-active antibiotics that interfere with the lipid II cycle in the cytoplasmic membrane (bacitracin, nisin, ramoplanin and vancomycin). Also seems to be involved in response to cationic antimicrobial peptides and secretion stress. Activates probably LiaR by phosphorylation. In Bacillus subtilis (strain 168), this protein is Sensor histidine kinase LiaS (liaS).